The sequence spans 650 residues: Solute carrier family 23 member 2 (650 aa).

Residues 1 to 20 (MMGIGKNTTSKSMEAGSSTE) are compositionally biased toward polar residues. Residues 1 to 21 (MMGIGKNTTSKSMEAGSSTEG) form a disordered region. At 9-110 (TSKSMEAGSS…LCIFLGLQHY (102 aa)) the chain is on the cytoplasmic side. The residue at position 70 (Ser-70) is a Phosphoserine. A Phosphothreonine modification is found at Thr-75. Phosphoserine is present on Ser-78. Thr-79 carries the post-translational modification Phosphothreonine. Ser-81 carries the post-translational modification Phosphoserine. Residues 111–131 (LTCFSGTIAVPFLLADAMCVG) traverse the membrane as a helical segment. Residues 132–139 (YDQWATSQ) are Extracellular-facing. A helical transmembrane segment spans residues 140–160 (LIGTIFFCVGITTLLQTTFGC). Residue Arg-161 is a topological domain, cytoplasmic. The helical transmembrane segment at 162–182 (LPLFQASAFAFLAPARAILSL) threads the bilayer. Residues 183–218 (DKWKCNTTDVSVANGTAELLHTEHIWYPRIREIQGA) are Extracellular-facing. Asn-188 and Asn-196 each carry an N-linked (GlcNAc...) asparagine glycan. The helical transmembrane segment at 219–239 (IIMSSLIEVVIGLLGLPGALL) threads the bilayer. Topologically, residues 240–266 (KYIGPLTITPTVALIGLSGFQAAGERA) are cytoplasmic. A helical transmembrane segment spans residues 267-284 (GKHWGIAMLTIFLVLLFS). At 285–288 (QYAR) the chain is on the extracellular side. The helical intramembrane region spans 289-302 (NVKFPLPIYKSKKG). The Extracellular segment spans residues 303–309 (WTAYKLQ). Residues 310–330 (LFKMFPIILAILVSWLLCFIF) form a helical membrane-spanning segment. The Cytoplasmic portion of the chain corresponds to 331–371 (TVTDVFPPDSTKYGFYARTDARQGVLLVAPWFKVPYPFQWG). The chain crosses the membrane as a helical span at residues 372 to 392 (LPTVSAAGVIGMLSAVVASII). Residues 393–417 (ESIGDYYACARLSCAPPPPIHAINR) lie on the Extracellular side of the membrane. The chain crosses the membrane as a helical span at residues 418–438 (GIFVEGLSCVLDGIFGTGNGS). The Cytoplasmic segment spans residues 439–461 (TSSSPNIGVLGITKVGSRRVIQC). Residues 462–482 (GAALMLALGMIGKFSALFASL) form a helical membrane-spanning segment. At 483–485 (PDP) the chain is on the extracellular side. Residues 486-506 (VLGALFCTLFGMITAVGLSNL) form a helical membrane-spanning segment. The Cytoplasmic segment spans residues 507 to 516 (QFIDLNSSRN). Residues 517 to 537 (LFVLGFSIFFGLVLPSYLRQN) form a helical membrane-spanning segment. Over 538–547 (PLVTGITGID) the chain is Extracellular. Residues 548 to 568 (QVLNVLLTTAMFVGGCVAFIL) form a helical membrane-spanning segment. The Cytoplasmic segment spans residues 569–650 (DNTIPGTPEE…SSDEDSQATG (82 aa)). A Phosphothreonine modification is found at Thr-649.

This sequence belongs to the nucleobase:cation symporter-2 (NCS2) (TC 2.A.40) family. As to quaternary structure, interacts with CLSTN3. Phosphorylated. In terms of tissue distribution, ubiquitous.

It is found in the cell membrane. It catalyses the reaction L-ascorbate(out) + 2 Na(+)(out) = L-ascorbate(in) + 2 Na(+)(in). In terms of biological role, sodium/ascorbate cotransporter. Mediates electrogenic uptake of vitamin C, with a stoichiometry of 2 Na(+) for each ascorbate. This is Solute carrier family 23 member 2 (SLC23A2) from Homo sapiens (Human).